Here is a 349-residue protein sequence, read N- to C-terminus: Aldehyde reductase YahK (349 aa).

7 residues coordinate Zn(2+): cysteine 40, histidine 62, cysteine 93, cysteine 96, cysteine 99, cysteine 107, and cysteine 158.

This sequence belongs to the zinc-containing alcohol dehydrogenase family. The cofactor is Zn(2+).

The enzyme catalyses a primary alcohol + NADP(+) = an aldehyde + NADPH + H(+). Its function is as follows. Catalyzes the reduction of a wide range of aldehydes into their corresponding alcohols. Has a strong preference for NADPH over NADH as the electron donor. Cannot use a ketone as substrate. Is a major source of NADPH-dependent aldehyde reductase activity in E.coli. The in vivo functions of YahK has yet to be determined. The polypeptide is Aldehyde reductase YahK (yahK) (Escherichia coli (strain K12)).